A 1382-amino-acid chain; its full sequence is Hepatocyte growth factor receptor (1382 aa).

A signal peptide spans 1–24; that stretch reads MRAPAVLAPGILVLLFTLVQRSCG. The Extracellular portion of the chain corresponds to 25–933; that stretch reads ECKEALVKSE…VIVQPDQNFT (909 aa). Residues 27–516 form the Sema domain; that stretch reads KEALVKSEMN…TGKKITKIPL (490 aa). The N-linked (GlcNAc...) asparagine glycan is linked to asparagine 45. 4 disulfides stabilise this stretch: cysteine 95–cysteine 101, cysteine 98–cysteine 160, cysteine 133–cysteine 141, and cysteine 173–cysteine 176. An N-linked (GlcNAc...) asparagine glycan is attached at asparagine 106. N-linked (GlcNAc...) asparagine glycosylation is found at asparagine 203 and asparagine 359. 2 disulfides stabilise this stretch: cysteine 299/cysteine 364 and cysteine 386/cysteine 398. Asparagine 400 and asparagine 406 each carry an N-linked (GlcNAc...) asparagine glycan. Intrachain disulfides connect cysteine 521–cysteine 539, cysteine 527–cysteine 562, cysteine 530–cysteine 546, and cysteine 542–cysteine 552. IPT/TIG domains lie at 564-656, 658-740, and 743-837; these read PTIY…FSYV, PIIT…FSYQ, and PIVY…LIYV. O-linked (Man) threonine glycosylation is present at threonine 583. 2 N-linked (GlcNAc...) asparagine glycosylation sites follow: asparagine 608 and asparagine 636. O-linked (Man) threonine glycans are attached at residues threonine 677 and threonine 762. Residues asparagine 786, asparagine 880, and asparagine 931 are each glycosylated (N-linked (GlcNAc...) asparagine). A helical transmembrane segment spans residues 934–956; sequence GLIVGVISISLIVLLLLGLFLWL. The Cytoplasmic portion of the chain corresponds to 957-1382; sequence KRRKQIKDLG…QDIIDGEGDT (426 aa). Position 967 is a phosphoserine (serine 967). Threonine 978 is subject to Phosphothreonine. A phosphoserine mark is found at serine 991, serine 998, and serine 1001. Phosphotyrosine is present on tyrosine 1004. Residues 1079–1346 enclose the Protein kinase domain; sequence VHFNEVIGRG…RISAIFSTFI (268 aa). ATP is bound by residues 1085–1093 and lysine 1111; that span reads IGRGHFGCV. Catalysis depends on aspartate 1205, which acts as the Proton acceptor. Residues 1213-1382 form an interaction with RANBP9 region; that stretch reads LDEKFTVKVA…QDIIDGEGDT (170 aa). Tyrosine 1231 is modified (phosphotyrosine). A phosphotyrosine; by autocatalysis mark is found at tyrosine 1235 and tyrosine 1236. Threonine 1290 bears the Phosphothreonine mark. Positions 1321–1360 are interaction with MUC20; sequence WHPKAELRPSFSELVSRISAIFSTFIGEHYVHVNATYVNV. A phosphotyrosine; by autocatalysis mark is found at tyrosine 1350 and tyrosine 1357. Phosphotyrosine is present on tyrosine 1366.

Belongs to the protein kinase superfamily. Tyr protein kinase family. In terms of assembly, heterodimer made of an alpha chain (50 kDa) and a beta chain (145 kDa) which are disulfide linked. Binds PLXNB1. Interacts when phosphorylated with downstream effectors including STAT3, PIK3R1, SRC, PCLG1, GRB2 and GAB1. Interacts with SPSB1, SPSB2 and SPSB4. Interacts with INPP5D/SHIP1. When phosphorylated at Tyr-1357, interacts with INPPL1/SHIP2. Interacts with RANBP9 and RANBP10, as well as SPSB1, SPSB2, SPSB3 and SPSB4. SPSB1 binding occurs in the presence and in the absence of HGF, however HGF treatment has a positive effect on this interaction. Interacts with MUC20; prevents interaction with GRB2 and suppresses hepatocyte growth factor-induced cell proliferation. Interacts with GRB10. Interacts with PTPN1 and PTPN2. Interacts with HSP90AA1 and HSP90AB1; the interaction suppresses MET kinase activity. Interacts with tensin TNS3. Interacts (when phosphorylated) with tensin TNS4 (via SH2 domain); the interaction increases MET protein stability by inhibiting MET endocytosis and subsequent lysosomal degradation. In terms of processing, autophosphorylated in response to ligand binding on Tyr-1235 and Tyr-1236 in the kinase domain leading to further phosphorylation of Tyr-1350 and Tyr-1357 in the C-terminal multifunctional docking site. Dephosphorylated by PTPRJ at Tyr-1350 and Tyr-1366. Dephosphorylated by PTPN1 and PTPN2. Ubiquitinated. Ubiquitination by CBL regulates the receptor stability and activity through proteasomal degradation. Post-translationally, O-mannosylation of IPT/TIG domains by TMEM260 is required for protein maturation. O-mannosylated residues are composed of single mannose glycans that are not elongated or modified.

The protein localises to the membrane. It catalyses the reaction L-tyrosyl-[protein] + ATP = O-phospho-L-tyrosyl-[protein] + ADP + H(+). Its activity is regulated as follows. In its inactive state, the C-terminal tail interacts with the catalytic domain and inhibits the kinase activity. Upon ligand binding, the C-terminal tail is displaced and becomes phosphorylated, thus increasing the kinase activity. Its function is as follows. Receptor tyrosine kinase that transduces signals from the extracellular matrix into the cytoplasm by binding to hepatocyte growth factor/HGF ligand. Regulates many physiological processes including proliferation, scattering, morphogenesis and survival. Ligand binding at the cell surface induces autophosphorylation of MET on its intracellular domain that provides docking sites for downstream signaling molecules. Following activation by ligand, interacts with the PI3-kinase subunit PIK3R1, PLCG1, SRC, GRB2, STAT3 or the adapter GAB1. Recruitment of these downstream effectors by MET leads to the activation of several signaling cascades including the RAS-ERK, PI3 kinase-AKT, or PLCgamma-PKC. The RAS-ERK activation is associated with the morphogenetic effects while PI3K/AKT coordinates prosurvival effects. During embryonic development, MET signaling plays a role in gastrulation, development and migration of muscles and neuronal precursors, angiogenesis and kidney formation. In adults, participates in wound healing as well as organ regeneration and tissue remodeling. Also promotes differentiation and proliferation of hematopoietic cells. The chain is Hepatocyte growth factor receptor (MET) from Mustela putorius furo (European domestic ferret).